A 132-amino-acid chain; its full sequence is Small ribosomal subunit protein uS8 (132 aa).

This sequence belongs to the universal ribosomal protein uS8 family. As to quaternary structure, part of the 30S ribosomal subunit. Contacts proteins S5 and S12.

Its function is as follows. One of the primary rRNA binding proteins, it binds directly to 16S rRNA central domain where it helps coordinate assembly of the platform of the 30S subunit. This Psychrobacter sp. (strain PRwf-1) protein is Small ribosomal subunit protein uS8.